Consider the following 217-residue polypeptide: Putative 8-oxo-dGTP diphosphatase 3 (217 aa).

Residues 30–164 (GRYGAAGLLL…PGFAASWQRL (135 aa)) enclose the Nudix hydrolase domain. Residues 67–92 (LPGGARDSHETPEQTAVRESSEEAGL) form a disordered region. Residues Gly-70, Glu-85, Glu-88, and Glu-89 each coordinate Mg(2+). The Nudix box signature appears at 70–91 (GARDSHETPEQTAVRESSEEAG).

Belongs to the Nudix hydrolase family. Requires Mg(2+) as cofactor. Mn(2+) is required as a cofactor.

It catalyses the reaction 8-oxo-dGTP + H2O = 8-oxo-dGMP + diphosphate + H(+). In terms of biological role, may be involved in the GO system responsible for removing an oxidatively damaged form of guanine (7,8-dihydro-8-oxoguanine, 8-oxo-dGTP) from DNA and the nucleotide pool. 8-oxo-dGTP is inserted opposite dA and dC residues of template DNA with almost equal efficiency thus leading to A.T to G.C transversions. MutT specifically degrades 8-oxo-dGTP to the monophosphate. This is Putative 8-oxo-dGTP diphosphatase 3 (mutT3) from Mycobacterium tuberculosis (strain CDC 1551 / Oshkosh).